Here is a 284-residue protein sequence, read N- to C-terminus: Bifunctional protein FolD 2 (284 aa).

Residues 166-168 and Ile232 contribute to the NADP(+) site; that span reads GAS.

It belongs to the tetrahydrofolate dehydrogenase/cyclohydrolase family. In terms of assembly, homodimer.

It catalyses the reaction (6R)-5,10-methylene-5,6,7,8-tetrahydrofolate + NADP(+) = (6R)-5,10-methenyltetrahydrofolate + NADPH. It carries out the reaction (6R)-5,10-methenyltetrahydrofolate + H2O = (6R)-10-formyltetrahydrofolate + H(+). Its pathway is one-carbon metabolism; tetrahydrofolate interconversion. Its function is as follows. Catalyzes the oxidation of 5,10-methylenetetrahydrofolate to 5,10-methenyltetrahydrofolate and then the hydrolysis of 5,10-methenyltetrahydrofolate to 10-formyltetrahydrofolate. In Pseudomonas putida (strain ATCC 47054 / DSM 6125 / CFBP 8728 / NCIMB 11950 / KT2440), this protein is Bifunctional protein FolD 2.